Consider the following 213-residue polypeptide: Pyridoxine/pyridoxamine 5'-phosphate oxidase (213 aa).

Residues 9-12 (RLEY) and K67 contribute to the substrate site. Residues 62–67 (RIVLLK), 77–78 (YT), R83, K84, and Q106 contribute to the FMN site. Residues Y124, R128, and S132 each contribute to the substrate site. Residues 141-142 (QS) and W185 contribute to the FMN site. 191–193 (RLH) is a substrate binding site. FMN is bound at residue R195.

It belongs to the pyridoxamine 5'-phosphate oxidase family. As to quaternary structure, homodimer. FMN serves as cofactor.

It catalyses the reaction pyridoxamine 5'-phosphate + O2 + H2O = pyridoxal 5'-phosphate + H2O2 + NH4(+). The catalysed reaction is pyridoxine 5'-phosphate + O2 = pyridoxal 5'-phosphate + H2O2. Its pathway is cofactor metabolism; pyridoxal 5'-phosphate salvage; pyridoxal 5'-phosphate from pyridoxamine 5'-phosphate: step 1/1. It participates in cofactor metabolism; pyridoxal 5'-phosphate salvage; pyridoxal 5'-phosphate from pyridoxine 5'-phosphate: step 1/1. Its function is as follows. Catalyzes the oxidation of either pyridoxine 5'-phosphate (PNP) or pyridoxamine 5'-phosphate (PMP) into pyridoxal 5'-phosphate (PLP). In Chromobacterium violaceum (strain ATCC 12472 / DSM 30191 / JCM 1249 / CCUG 213 / NBRC 12614 / NCIMB 9131 / NCTC 9757 / MK), this protein is Pyridoxine/pyridoxamine 5'-phosphate oxidase.